A 349-amino-acid polypeptide reads, in one-letter code: Protein BPS1, chloroplastic (349 aa).

Residues 1–43 (MARPQDPPRGFFPFGNPFKNLSSKNSVLSSKLLPLLNNFETNL) constitute a chloroplast transit peptide.

As to expression, expressed in roots, hypocotyls, cotyledons, leaves, flowers and siliques.

The protein localises to the plastid. Its subcellular location is the chloroplast. In terms of biological role, required for normal root and shoot development. Prevents constitutive production of a root mobile carotenoid-derived signaling compound that is capable of arresting shoot and leaf development. This Arabidopsis thaliana (Mouse-ear cress) protein is Protein BPS1, chloroplastic.